The primary structure comprises 145 residues: Ribonuclease H (145 aa).

An RNase H type-1 domain is found at 2 to 143; that stretch reads SKKEVIIYTD…ADSLARKAII (142 aa). The Mg(2+) site is built by aspartate 11, glutamate 49, aspartate 71, and aspartate 135.

It belongs to the RNase H family. In terms of assembly, monomer. Mg(2+) serves as cofactor.

The protein resides in the cytoplasm. It carries out the reaction Endonucleolytic cleavage to 5'-phosphomonoester.. In terms of biological role, endonuclease that specifically degrades the RNA of RNA-DNA hybrids. The sequence is that of Ribonuclease H from Wolbachia pipientis wMel.